Reading from the N-terminus, the 313-residue chain is L-lactate dehydrogenase 1 (313 aa).

NAD(+)-binding positions include valine 15, aspartate 36, lysine 41, tyrosine 66, and 80-81 (GA). Residues glutamine 83 and arginine 89 each contribute to the substrate site. NAD(+) is bound by residues serine 102, 119–121 (VSN), and serine 144. 121–124 (NPVD) provides a ligand contact to substrate. Substrate is bound at residue 149-152 (DTSR). The beta-D-fructose 1,6-bisphosphate site is built by arginine 154 and histidine 169. The active-site Proton acceptor is the histidine 176. Phosphotyrosine is present on tyrosine 222. Threonine 231 serves as a coordination point for substrate.

The protein belongs to the LDH/MDH superfamily. LDH family. Homotetramer.

It localises to the cytoplasm. It catalyses the reaction (S)-lactate + NAD(+) = pyruvate + NADH + H(+). Its pathway is fermentation; pyruvate fermentation to lactate; (S)-lactate from pyruvate: step 1/1. With respect to regulation, allosterically activated by fructose 1,6-bisphosphate (FBP). In terms of biological role, catalyzes the conversion of lactate to pyruvate. The sequence is that of L-lactate dehydrogenase 1 from Clostridium acetobutylicum (strain ATCC 824 / DSM 792 / JCM 1419 / IAM 19013 / LMG 5710 / NBRC 13948 / NRRL B-527 / VKM B-1787 / 2291 / W).